The following is a 1749-amino-acid chain: Transposon Ty1-NL2 Gag-Pol polyprotein (1749 aa).

Polar residues-rich tracts occupy residues 1–23 (MESQ…SVTS), 48–60 (TKAN…TPAS), 71–97 (SPQT…NQAN), and 129–152 (QFPQ…GNTF). Disordered regions lie at residues 1-97 (MESQ…NQAN), 129-171 (QFPQ…YVRP), and 352-421 (GSRN…SKST). Low complexity predominate over residues 153-165 (TDSSSADSDMTST). An RNA-binding region spans residues 299-401 (NNGIHINNKV…NSKSKTARAH (103 aa)). Residues 402–418 (NVSTSNNSPSTDNDSIS) are compositionally biased toward low complexity. The active-site For protease activity; shared with dimeric partner is D461. An integrase-type zinc finger-like region spans residues 583-640 (NVHTSESTRKYPYPFIHRMLAHANAQTIRYSLKNNTITYFNESDVDWSSAIDYQCPDC). Residues 660–835 (NSYEPFQYLH…AGLDISTLLP (176 aa)) form the Integrase catalytic domain. 2 residues coordinate Mg(2+): D671 and D736. Residues 945 to 1166 (PRNVLSKAVS…LGGIGDSNAY (222 aa)) form a disordered region. Low complexity predominate over residues 954–963 (SPTDSTPPST). Positions 999 to 1009 (STPQISDIEST) are enriched in polar residues. Basic and acidic residues predominate over residues 1032–1047 (ESSHTSKSKDFRHSDS). 2 stretches are compositionally biased toward polar residues: residues 1048–1076 (YSDN…QTSE) and 1089–1100 (SIDTSSSESNSL). The Bipartite nuclear localization signal motif lies at 1172–1206 (KKRSLEDNETEIKVSRDTWNTKNMRSLEPPRSKKR). The Reverse transcriptase Ty1/copia-type domain maps to 1332 to 1470 (NNYYITQLDI…DILGLEIKYQ (139 aa)). Positions 1340, 1421, 1422, 1604, 1646, and 1679 each coordinate Mg(2+). The 143-residue stretch at 1604–1746 (DASYGNQPYY…IKTFKLLTNK (143 aa)) folds into the RNase H Ty1/copia-type domain.

As to quaternary structure, the capsid protein forms a homotrimer, from which the VLPs are assembled. The protease is a homodimer, whose active site consists of two apposed aspartic acid residues. In terms of processing, initially, virus-like particles (VLPs) are composed of the structural unprocessed proteins Gag and Gag-Pol, and also contain the host initiator methionine tRNA (tRNA(i)-Met) which serves as a primer for minus-strand DNA synthesis, and a dimer of genomic Ty RNA. Processing of the polyproteins occurs within the particle and proceeds by an ordered pathway, called maturation. First, the protease (PR) is released by autocatalytic cleavage of the Gag-Pol polyprotein yielding capsid protein p45 and a Pol-p154 precursor protein. This cleavage is a prerequisite for subsequent processing of Pol-p154 at the remaining sites to release the mature structural and catalytic proteins. Maturation takes place prior to the RT reaction and is required to produce transposition-competent VLPs.

It localises to the cytoplasm. The protein localises to the nucleus. It catalyses the reaction DNA(n) + a 2'-deoxyribonucleoside 5'-triphosphate = DNA(n+1) + diphosphate. The catalysed reaction is Endonucleolytic cleavage to 5'-phosphomonoester.. Capsid protein (CA) is the structural component of the virus-like particle (VLP), forming the shell that encapsulates the retrotransposons dimeric RNA genome. The particles are assembled from trimer-clustered units and there are holes in the capsid shells that allow for the diffusion of macromolecules. CA also has nucleocapsid-like chaperone activity, promoting primer tRNA(i)-Met annealing to the multipartite primer-binding site (PBS), dimerization of Ty1 RNA and initiation of reverse transcription. In terms of biological role, the aspartyl protease (PR) mediates the proteolytic cleavages of the Gag and Gag-Pol polyproteins after assembly of the VLP. Functionally, reverse transcriptase/ribonuclease H (RT) is a multifunctional enzyme that catalyzes the conversion of the retro-elements RNA genome into dsDNA within the VLP. The enzyme displays a DNA polymerase activity that can copy either DNA or RNA templates, and a ribonuclease H (RNase H) activity that cleaves the RNA strand of RNA-DNA heteroduplexes during plus-strand synthesis and hydrolyzes RNA primers. The conversion leads to a linear dsDNA copy of the retrotransposon that includes long terminal repeats (LTRs) at both ends. Its function is as follows. Integrase (IN) targets the VLP to the nucleus, where a subparticle preintegration complex (PIC) containing at least integrase and the newly synthesized dsDNA copy of the retrotransposon must transit the nuclear membrane. Once in the nucleus, integrase performs the integration of the dsDNA into the host genome. The protein is Transposon Ty1-NL2 Gag-Pol polyprotein (TY1B-NL2) of Saccharomyces cerevisiae (strain ATCC 204508 / S288c) (Baker's yeast).